Consider the following 306-residue polypeptide: MSTLGHQYDNSLVSNAFGFLRLPMNFQPYDSDADWVITGVPFDMATSGRAGGRHGPAAIRQVSTNLAWEHNRFPWNFDMRERLNVVDCGDLVYAFGDAREMSEKLQAHAEKLLAAGKRMLSFGGDHFVTLPLLRAHAKHFGKMALVHFDAHTDTYANGCEFDHGTMFYTAPKEGLIDPNHSVQIGIRTEFDKDNGFTVLDACQVNDRSVDDIIAQVKQIVGDMPVYLTFDIDCLDPAFAPGTGTPVIGGLTSDRAIKLVRGLKDLNIVGMDVVEVAPAYDQSEITALAAATLALEMLYIQAAKKGE.

Mn(2+) contacts are provided by His126, Asp149, His151, Asp153, Asp230, and Asp232.

The protein belongs to the arginase family. Agmatinase subfamily. Requires Mn(2+) as cofactor.

The catalysed reaction is agmatine + H2O = urea + putrescine. It functions in the pathway amine and polyamine biosynthesis; putrescine biosynthesis via agmatine pathway; putrescine from agmatine: step 1/1. In terms of biological role, catalyzes the formation of putrescine from agmatine. The polypeptide is Agmatinase (Escherichia coli O1:K1 / APEC).